A 541-amino-acid polypeptide reads, in one-letter code: Halolysin-like extracellular serine protease Nep (541 aa).

A signal peptide (tat-type signal) is located at residues 1-33; sequence MTRDTNSNVGRRSVLKAASALGAFLGLGGVASA. A propeptide spanning residues 34–121 is cleaved from the precursor; the sequence is TPGREPGPKK…DNATYETLEV (88 aa). The region spanning 130 to 405 is the Peptidase S8 domain; it reads QYAPQQVNCE…YGRVDAELAV (276 aa). Active-site charge relay system residues include aspartate 157, histidine 198, and serine 351. Residues 403-453 form a disordered region; that stretch reads LAVTTDPDNGDDDDDDDDDEDDPGDGECGDETNTATADGELSGGWGGNPSD. Residues 410–432 show a composition bias toward acidic residues; it reads DNGDDDDDDDDDEDDPGDGECGD.

Belongs to the peptidase S8 family. In terms of assembly, monomer. In terms of processing, exported by the Tat system. The position of the signal peptide cleavage has not been experimentally proven. After transport across the membrane, the propeptide is probably processed autocatalytically, yielding the mature fully active protease.

It localises to the secreted. Dependent on high salt concentrations for activity and stability. Strongly inhibited by the serine protease inhibitors diisopropyl fluorophosphate (DFP), phenylmethyl sulfonylfluoride (PMSF) and chymostatin. Also inhibited by denaturing agents such as SDS, urea, and HCl guanidinium. Activated by thiol-containing reducing agents such as dithiotreitol (DTT) and 2-mercaptoethanol. Functionally, serine protease that hydrolyzes large proteins such as casein and gelatin. Cleaves preferentially at the carboxyl terminus of Phe, Tyr or Leu. Is also able to catalyze peptide synthesis under different salt concentrations in the presence of dimethyl sulfoxide (DMSO). The sequence is that of Halolysin-like extracellular serine protease Nep from Natrialba magadii.